We begin with the raw amino-acid sequence, 420 residues long: Protein disulfide isomerase CRELD1 (420 aa).

Positions 1–29 (MAPWPPKGLVPAMLWGLSLFLNLPGPIWL) are cleaved as a signal peptide. At 30–362 (QPSPPPQSSP…GFFSEMTEDE (333 aa)) the chain is on the extracellular side. The short motif at 46–49 (CHTC) is the CXXC element. Cysteine 46 and cysteine 49 are disulfide-bonded. A glycan (N-linked (GlcNAc...) asparagine) is linked at asparagine 79. An EGF-like 1 domain is found at 153–193 (LPCPGGTERPCGGYGQCEGEGTRGGSGHCDCQAGYGGEACG). Cystine bridges form between cysteine 155/cysteine 169, cysteine 163/cysteine 181, and cysteine 183/cysteine 192. The N-linked (GlcNAc...) asparagine glycan is linked to asparagine 205. FU repeat units lie at residues 208–256 (HLVC…GANC) and 268–315 (SYEC…EVCP). Positions 278–281 (CLGC) match the CXXC motif. 4 cysteine pairs are disulfide-bonded: cysteine 278–cysteine 281, cysteine 309–cysteine 321, cysteine 314–cysteine 330, and cysteine 332–cysteine 343. The EGF-like 2; calcium-binding domain occupies 305–344 (DVDECETEVCPGENKQCENTEGGYRCICAEGYKQMEGICV). Residues 363–383 (LVVLQQMFFGIIICALATLAA) form a helical membrane-spanning segment. Position 384 (lysine 384) is a topological domain, cytoplasmic. The chain crosses the membrane as a helical span at residues 385–405 (GDLVFTAIFIGAVAAMTGYWL). Residues 406-420 (SERSDRVLEGFIKGR) lie on the Extracellular side of the membrane.

It belongs to the CRELD family. As to expression, highly expressed in fetal lung, liver, kidney, adult heart, brain and skeletal muscle. Weakly expressed in placenta, fetal brain, and adult lung, liver, kidney and pancreas.

The protein localises to the membrane. It carries out the reaction Catalyzes the rearrangement of -S-S- bonds in proteins.. In terms of biological role, protein disulfide isomerase. Promotes the localization of acetylcholine receptors (AChRs) to the plasma membrane. The sequence is that of Protein disulfide isomerase CRELD1 (CRELD1) from Homo sapiens (Human).